Here is a 416-residue protein sequence, read N- to C-terminus: tRNA (guanine-N(7)-)-methyltransferase non-catalytic subunit wuho (416 aa).

Residues 47–88 (TQSQESCPATATSTTAGKEPGGKEQQLAKQPEEGGTSASGSV) form a disordered region. Polar residues predominate over residues 49–62 (SQESCPATATSTTA). 4 WD repeats span residues 89-130 (ATST…ARLL), 177-216 (GHLS…DIHS), 220-258 (GHRE…ELLQ), and 317-357 (AGSW…PTTN).

This sequence belongs to the WD repeat TRM82 family. Forms a heterodimer with the catalytic subunit Mettl1. Interacts with mei-P26 and weakly interacts with bgcn; required for the function or formation of the mei-P26-bgcn-bam-sxl complex. Interacts with nanos; may be involved in mei-P26-dependent derepression of the BMP signaling pathway. Interacts with Myc; the interaction may be mediated by mei-P26 and may be involved in the regulation of ribosome biogenesis. As to expression, in testis, it is present at high level in hub cells, a niche for germline stem cells of testis. Ubiquitously expressed in all testicular cells throughout spermatogenesis. Ubiquitously expressed in all germline and somatic cells of the ovary.

The protein localises to the nucleus. It localises to the cytoplasm. The protein operates within tRNA modification; N(7)-methylguanine-tRNA biosynthesis. Required for the Mettl1-dependent formation of N(7)-methylguanine at position 46 (m7G46) in tRNA. In the Mettl1-wuho methyltransferase complex, it is required to stabilize and induce conformational changes of the catalytic subunit. Required for binding of nanos mRNA and repression of translation by the mei-P26-bgcn-bam-sxl complex. May cooperate with mei-P26 and nanos to derepress the BMP signaling pathway. May cooperate with mei-P26 to suppress expression of a subset of microRNAs. May cooperate with mei-P26 to regulate bam expression levels in germline cells during gametogenesis. Required to promote mitosis to meiosis transition during gametogenesis. May regulate germline cell division in part by regulating ribosome biogenesis. The polypeptide is tRNA (guanine-N(7)-)-methyltransferase non-catalytic subunit wuho (Drosophila erecta (Fruit fly)).